Consider the following 310-residue polypeptide: Probable manganese-dependent inorganic pyrophosphatase (310 aa).

Positions 10, 14, 16, 75, 97, and 149 each coordinate Mn(2+).

Belongs to the PPase class C family. The cofactor is Mn(2+).

The protein resides in the cytoplasm. It catalyses the reaction diphosphate + H2O = 2 phosphate + H(+). The chain is Probable manganese-dependent inorganic pyrophosphatase from Clostridium acetobutylicum (strain ATCC 824 / DSM 792 / JCM 1419 / IAM 19013 / LMG 5710 / NBRC 13948 / NRRL B-527 / VKM B-1787 / 2291 / W).